The following is a 102-amino-acid chain: Urease subunit beta (102 aa).

This sequence belongs to the urease beta subunit family. In terms of assembly, heterotrimer of UreA (gamma), UreB (beta) and UreC (alpha) subunits. Three heterotrimers associate to form the active enzyme.

It localises to the cytoplasm. The catalysed reaction is urea + 2 H2O + H(+) = hydrogencarbonate + 2 NH4(+). Its pathway is nitrogen metabolism; urea degradation; CO(2) and NH(3) from urea (urease route): step 1/1. The sequence is that of Urease subunit beta from Methylibium petroleiphilum (strain ATCC BAA-1232 / LMG 22953 / PM1).